The sequence spans 95 residues: uncharacterized protein (95 aa).

This is an uncharacterized protein from Dictyostelium discoideum (Social amoeba).